The chain runs to 405 residues: CMP-sialic acid transporter 5 (405 aa).

The Cytoplasmic portion of the chain corresponds to 1–43 (MQRNGVVECSVCRSRLVVPSPRSVSRAYDKHRSKISSKFRALN). Residues 44 to 64 (VLLVVGDCILVGLQPILVFMS) form a helical membrane-spanning segment. Residues 65 to 74 (KVDGKFQFSP) lie on the Lumenal side of the membrane. Residues 75–95 (ISVNFLTEVTKVVFAIVMLII) traverse the membrane as a helical segment. Over 96 to 121 (QSRKQKVGEKPLLARSTFIQAARNNA) the chain is Cytoplasmic. Residues 122-142 (LLAVPALLYAINNYLKFIMQL) form a helical membrane-spanning segment. Residues 143–147 (YFNPS) lie on the Lumenal side of the membrane. Residues 148-168 (TVKMLSNLKVLVIAVLLKFIM) traverse the membrane as a helical segment. Topologically, residues 169 to 171 (KRR) are cytoplasmic. The helical transmembrane segment at 172-192 (FSVIQWEALALLLIGISINQL) threads the bilayer. The Lumenal portion of the chain corresponds to 193–200 (RTVPAGNT). A helical membrane pass occupies residues 201–221 (AFGLPVTAIAYIYTLIFVTVP). The Cytoplasmic segment spans residues 222-244 (SLASVYNEYALKSQYDTSIYLQN). Residues 245–265 (LFLYGYGAIFNFLGILGTALF) traverse the membrane as a helical segment. Residues 266-281 (QGPESFNILRGHSRAT) lie on the Lumenal side of the membrane. The helical transmembrane segment at 282-302 (MFLICNNAAQGILSSFFFKYA) threads the bilayer. Residues 303–322 (DTILKKYSSTVATIFTGLAS) are Cytoplasmic-facing. Residues 323 to 343 (AAFLGHTLTINFLLGISVVFI) traverse the membrane as a helical segment. At 344–405 (SMHQFFSPLA…TDERQPLLPT (62 aa)) the chain is on the lumenal side. A disordered region spans residues 368 to 405 (DTQNHRSSESSFVNMTAGAAEDASHRIGTDERQPLLPT). A compositionally biased stretch (basic and acidic residues) spans 389 to 405 (DASHRIGTDERQPLLPT).

Belongs to the nucleotide-sugar transporter family. CMP-Sialate:CMP antiporter (TC 2.A.7.12) subfamily.

The protein localises to the golgi apparatus membrane. In terms of biological role, sugar transporter involved in the transport of CMP-sialic acid from the cytoplasm into the Golgi. May transport important nucleotide sugars such as CMP-Kdo (2-keto-3-deoxy-D-manno-octulosonic acid) in physiological conditions. The chain is CMP-sialic acid transporter 5 from Oryza sativa subsp. japonica (Rice).